A 96-amino-acid chain; its full sequence is Co-chaperonin GroES (96 aa).

The protein belongs to the GroES chaperonin family. In terms of assembly, heptamer of 7 subunits arranged in a ring. Interacts with the chaperonin GroEL.

It is found in the cytoplasm. Its function is as follows. Together with the chaperonin GroEL, plays an essential role in assisting protein folding. The GroEL-GroES system forms a nano-cage that allows encapsulation of the non-native substrate proteins and provides a physical environment optimized to promote and accelerate protein folding. GroES binds to the apical surface of the GroEL ring, thereby capping the opening of the GroEL channel. The polypeptide is Co-chaperonin GroES (Haemophilus influenzae (strain PittEE)).